A 99-amino-acid polypeptide reads, in one-letter code: Nucleoid-associated protein SZO_16661 (99 aa).

It belongs to the YbaB/EbfC family. In terms of assembly, homodimer.

The protein localises to the cytoplasm. Its subcellular location is the nucleoid. Its function is as follows. Binds to DNA and alters its conformation. May be involved in regulation of gene expression, nucleoid organization and DNA protection. The polypeptide is Nucleoid-associated protein SZO_16661 (Streptococcus equi subsp. zooepidemicus (strain H70)).